The sequence spans 51 residues: Insulin (51 aa).

Cystine bridges form between C7/C37, C19/C50, and C36/C41.

The protein belongs to the insulin family. Heterodimer of a B chain and an A chain linked by two disulfide bonds.

It localises to the secreted. Its function is as follows. Insulin decreases blood glucose concentration. It increases cell permeability to monosaccharides, amino acids and fatty acids. It accelerates glycolysis, the pentose phosphate cycle, and glycogen synthesis in liver. The polypeptide is Insulin (INS) (Hystrix cristata (North African crested porcupine)).